We begin with the raw amino-acid sequence, 493 residues long: Probable malate:quinone oxidoreductase (493 aa).

It belongs to the MQO family. FAD is required as a cofactor.

The catalysed reaction is (S)-malate + a quinone = a quinol + oxaloacetate. It participates in carbohydrate metabolism; tricarboxylic acid cycle; oxaloacetate from (S)-malate (quinone route): step 1/1. In Mycobacterium marinum (strain ATCC BAA-535 / M), this protein is Probable malate:quinone oxidoreductase.